The following is a 260-amino-acid chain: Cell division protein DivIB (260 aa).

The Cytoplasmic segment spans residues M1 to K25. Residues M26 to S46 traverse the membrane as a helical segment. Topologically, residues Y47 to Y260 are extracellular. The POTRA domain maps to S48 to Y119.

It belongs to the FtsQ/DivIB family. DivIB subfamily.

The protein resides in the cell membrane. Functionally, cell division protein that may be involved in stabilizing or promoting the assembly of the division complex. This chain is Cell division protein DivIB, found in Lentilactobacillus buchneri (strain NRRL B-30929) (Lactobacillus buchneri).